A 342-amino-acid chain; its full sequence is Growth hormone-regulated TBC protein 1 (342 aa).

A Rab-GAP TBC domain is found at 72-263 (GIPNEHRSHV…RIWDCLFFEG (192 aa)).

In terms of biological role, may act as a GTPase-activating protein for Rab family protein(s). This is Growth hormone-regulated TBC protein 1 (grtp1) from Xenopus tropicalis (Western clawed frog).